We begin with the raw amino-acid sequence, 1013 residues long: MDIS1-interacting receptor like kinase 1 (1013 aa).

Residues Met-1–Ala-23 form the signal peptide. Residues Ser-24–Arg-633 are Extracellular-facing. Asn-61, Asn-82, Asn-101, Asn-137, Asn-146, Asn-151, and Asn-155 each carry an N-linked (GlcNAc...) asparagine glycan. LRR repeat units follow at residues Asn-70 to Leu-94, Ser-95 to Pro-117, Lys-119 to Asn-137, Ser-139 to Leu-163, Val-164 to Asn-186, Leu-187 to Ser-213, Glu-215 to Asn-234, Ile-235 to Leu-259, Lys-260 to Ile-283, Thr-284 to Leu-307, Lys-308 to Leu-331, Gln-333 to Asn-355, Pro-357 to Lys-379, Asn-381 to Cys-403, Ser-405 to Lys-426, Leu-427 to Ser-451, Ser-453 to Ile-475, Asn-477 to Asp-498, Cys-499 to Cys-523, Lys-525 to Met-547, Ser-548 to Ser-571, and Ala-573 to Lys-595. N-linked (GlcNAc...) asparagine glycosylation occurs at Asn-199. Asn-271 is a glycosylation site (N-linked (GlcNAc...) asparagine). The N-linked (GlcNAc...) asparagine glycan is linked to Asn-341. N-linked (GlcNAc...) asparagine glycans are attached at residues Asn-381, Asn-389, and Asn-417. 3 N-linked (GlcNAc...) asparagine glycosylation sites follow: Asn-535, Asn-557, and Asn-578. A helical transmembrane segment spans residues Ile-634 to Val-654. Residues Thr-655 to Leu-1013 lie on the Cytoplasmic side of the membrane. Residue Thr-691 is modified to Phosphothreonine. Positions Ile-699–Arg-983 constitute a Protein kinase domain. ATP contacts are provided by residues Ile-705–Val-713 and Lys-728. Thr-710 carries the phosphothreonine; by autocatalysis modification. A phosphothreonine; by autocatalysis mark is found at Thr-741 and Thr-742. Tyr-777 and Tyr-818 each carry phosphotyrosine. The Proton acceptor role is filled by Asp-831. Position 862 is a phosphothreonine; by autocatalysis (Thr-862). Residue Ser-864 is modified to Phosphoserine; by autocatalysis. Phosphotyrosine is present on Tyr-872. Residue Tyr-879 is modified to Phosphotyrosine; by autocatalysis. 2 positions are modified to phosphothreonine; by autocatalysis: Thr-880 and Thr-992. A disordered region spans residues Leu-976–Leu-1013. Residues Ser-1002–Leu-1013 show a composition bias toward polar residues.

Belongs to the protein kinase superfamily. Ser/Thr protein kinase family. Homodimer. Interacts with MDIS1 and LURE1.2. In terms of processing, autophosphorylation induced by the interaction with LURE1.2. As to expression, expressed in pollen tubes.

Its subcellular location is the cell membrane. The enzyme catalyses L-seryl-[protein] + ATP = O-phospho-L-seryl-[protein] + ADP + H(+). It carries out the reaction L-threonyl-[protein] + ATP = O-phospho-L-threonyl-[protein] + ADP + H(+). Its function is as follows. Involved in the regulation of procambium maintenance and polarity during vascular-tissue development. Involved in the pollen tube perception of the female signal. Phosphorylates MDSI1. The polypeptide is MDIS1-interacting receptor like kinase 1 (Arabidopsis thaliana (Mouse-ear cress)).